The primary structure comprises 623 residues: Membralin-like protein At1g60995 (623 aa).

A helical membrane pass occupies residues 24–44; the sequence is GFLEYTYLFVAITLFCILVVM. The disordered stretch occupies residues 99–119; sequence SLEVSKTDQESSTSEENTDDT. Helical transmembrane passes span 315-335, 363-383, 392-412, and 424-444; these read GVLMMSLFVFFTTTMSVSFTL, IFVHVIESLVFVPIMIGILFF, LLAFMVLVLVWLCELFTLISV, and FFLLYFLVFHIYFFSYAYGFS. Disordered stretches follow at residues 506–567 and 602–623; these read NRTT…QAGA and EAQVFADTSPPQNPHHDPLSVD. A compositionally biased stretch (polar residues) spans 514–531; the sequence is PSGPNHTTPNQNTETRSF.

Belongs to the membralin family.

It is found in the membrane. The sequence is that of Membralin-like protein At1g60995 from Arabidopsis thaliana (Mouse-ear cress).